The sequence spans 267 residues: Probable proteasome subunit beta type-2 (267 aa).

The propeptide at 1–35 (MMGINERKGFDFEYYQRNLLLQEKGFPTPKATSTG) is removed in mature form. Catalysis depends on Thr-36, which acts as the Nucleophile.

Belongs to the peptidase T1B family. The 26S proteasome consists of a 20S proteasome core and two 19S regulatory subunits. The 20S proteasome core is composed of 28 subunits that are arranged in four stacked rings, resulting in a barrel-shaped structure. The two end rings are each formed by seven alpha subunits, and the two central rings are each formed by seven beta subunits. The catalytic chamber with the active sites is on the inside of the barrel.

The protein resides in the cytoplasm. It localises to the nucleus. It carries out the reaction Cleavage of peptide bonds with very broad specificity.. In terms of biological role, the proteasome is a multicatalytic proteinase complex which is characterized by its ability to cleave peptides with Arg, Phe, Tyr, Leu, and Glu adjacent to the leaving group at neutral or slightly basic pH. The proteasome has an ATP-dependent proteolytic activity (Potential). The chain is Probable proteasome subunit beta type-2 (pup1) from Schizosaccharomyces pombe (strain 972 / ATCC 24843) (Fission yeast).